Consider the following 317-residue polypeptide: UV DNA damage endonuclease (317 aa).

Belongs to the uve1/UvsE family.

Component in a DNA repair pathway. Removal of UV LIGHT damaged nucleotides. Recognizes pyrimidine dimers and cleave a phosphodiester bond immediately 5' to the lesion. The sequence is that of UV DNA damage endonuclease from Bacillus thuringiensis subsp. konkukian (strain 97-27).